The primary structure comprises 653 residues: Intermembrane lipid transfer protein vps13l (653 aa).

A B box-type zinc finger spans residues 5 to 49; it reads ISELKCQQHDKLVTIYCCACDAYFCKKCDKEKHSQDDNQEDSLHI. Residues C10, H13, C32, and H37 each contribute to the Zn(2+) site. Disordered stretches follow at residues 159–232, 248–420, and 627–653; these read NLID…NRKK, HILN…EDDS, and EKSN…PNEN. A compositionally biased stretch (low complexity) spans 195–213; the sequence is SPSPSRSSESNSTTNNNNN. A compositionally biased stretch (acidic residues) spans 266-277; sequence DYDDDDDNDDDN. Positions 278 to 293 are enriched in low complexity; the sequence is NNNNNNNNNNNNNNNN. Residues 314-330 show a composition bias toward basic and acidic residues; that stretch reads ETEKEIENVENKIDNKP. A compositionally biased stretch (acidic residues) spans 366–381; the sequence is IFEEEEEEEEDEDEVG.

This sequence belongs to the VPS13 family.

The protein resides in the membrane. In terms of biological role, mediates the transfer of lipids between membranes at organelle contact sites. This Dictyostelium discoideum (Social amoeba) protein is Intermembrane lipid transfer protein vps13l (vps13l).